The chain runs to 815 residues: Protein-glutamine gamma-glutamyltransferase K (815 aa).

Disordered stretches follow at residues 1-40 (MDGP…RRGG) and 59-100 (DDWG…AAGD). Residues 16–25 (WQPPTTPSPE) show a composition bias toward pro residues. The residue at position 21 (Thr-21) is a Phosphothreonine. 5 positions are modified to phosphoserine: Ser-23, Ser-80, Ser-83, Ser-90, and Ser-93. Basic and acidic residues predominate over residues 59 to 87 (DDWGPEPHRDRGSGSGRRRPDSRGSDSRR). Catalysis depends on residues Cys-375, His-434, and Asp-457. Ca(2+) is bound by residues Asn-497, Asp-499, Glu-546, and Glu-551. Positions 795-815 (SNAGGNSPLGETIPMASRGGA) are disordered.

Belongs to the transglutaminase superfamily. Transglutaminase family. As to quaternary structure, interacts with PLAAT4. Requires Ca(2+) as cofactor. Palmitoylated. Post-translationally, the membrane anchorage region possesses a cluster of five cysteines within which fatty acid(s) may become thioester-linked. It is subject to phorbol ester-stimulated phosphorylation and is hypersensitive to proteolysis, which releases the enzyme in a soluble form. In terms of processing, tyrosine-phosphorylated.

Its subcellular location is the membrane. The enzyme catalyses L-glutaminyl-[protein] + L-lysyl-[protein] = [protein]-L-lysyl-N(6)-5-L-glutamyl-[protein] + NH4(+). In terms of biological role, catalyzes the cross-linking of proteins and the conjugation of polyamines to proteins. Responsible for cross-linking epidermal proteins during formation of the stratum corneum. Involved in cell proliferation. The sequence is that of Protein-glutamine gamma-glutamyltransferase K (TGM1) from Canis lupus familiaris (Dog).